A 419-amino-acid polypeptide reads, in one-letter code: MNNQKQQKPTLSGQRFKTRKRDEKERFDPTQFQDCIIQGLTETGTDLEAVAKFLDASGAKLDYRRYAETLFDILVAGGMLAPGGTLADDMMRTDVCVFAAQEDLETMQAFAQVFNKLIRRYKYLEKGFEDEVKKLLLFLKGFSESERNKLAMLTGVLLANGTLNASILNSLYNENLVKEGVSAAFAVKLFKSWINEKDINAVAASLRKVSMDNRLMELFPANKQSVEHFTKYFTEAGLKELSEYVRNQQTIGARKELQKELQEQMSRGDPFKDIILYVKEEMKKNNIPEPVVIGIVWSSVMSTVEWNKKEELVAEQAIKHLKQYSPLLAAFTTQGQSELTLLLKIQEYCYDNIHFMKAFQKIVVLFYKAEVLSEEPILKWYKDAHVAKGKSVFLEQMKKFVEWLKNAEEESESEAEEGD.

Met-1 carries the N-acetylmethionine modification. Polar residues predominate over residues 1–15; it reads MNNQKQQKPTLSGQR. Residues 1–26 are disordered; that stretch reads MNNQKQQKPTLSGQRFKTRKRDEKER. The residue at position 12 (Ser-12) is a Phosphoserine. A W2 domain is found at 247–414; the sequence is NQQTIGARKE…KNAEEESESE (168 aa). Lys-368 participates in a covalent cross-link: Glycyl lysine isopeptide (Lys-Gly) (interchain with G-Cter in SUMO2). Ser-411 and Ser-413 each carry phosphoserine.

Belongs to the BZW family.

In terms of biological role, translation initiation regulator which represses repeat-associated non-AUG (RAN) initiated translation probably by acting as a competitive inhibitor of eukaryotic translation initiation factor 5 (EIF5) function. Enhances histone H4 gene transcription but does not seem to bind DNA directly. The polypeptide is eIF5-mimic protein 2 (BZW1) (Homo sapiens (Human)).